Here is a 554-residue protein sequence, read N- to C-terminus: Carboxypeptidase Y homolog A (554 aa).

Positions 1–17 (MRVAASTVLLGVASAAS) are cleaved as a signal peptide. The propeptide occupies 18–137 (FQQQTQHVLS…KLADFNLRVK (120 aa)). 5 disulfide bridges follow: Cys-191–Cys-431, Cys-325–Cys-339, Cys-349–Cys-372, Cys-356–Cys-365, and Cys-394–Cys-401. An N-linked (GlcNAc...) asparagine glycan is attached at Asn-222. Residue Ser-278 is part of the active site. Asp-470 is an active-site residue. N-linked (GlcNAc...) asparagine glycosylation is present at Asn-518. Residue His-529 is part of the active site.

The protein belongs to the peptidase S10 family.

The protein resides in the vacuole. It carries out the reaction Release of a C-terminal amino acid with broad specificity.. Vacuolar carboxypeptidase involved in degradation of small peptides. Digests preferentially peptides containing an aliphatic or hydrophobic residue in P1' position, as well as methionine, leucine or phenylalanine in P1 position of ester substrate. This chain is Carboxypeptidase Y homolog A (CPYA), found in Podospora anserina (strain S / ATCC MYA-4624 / DSM 980 / FGSC 10383) (Pleurage anserina).